The chain runs to 283 residues: Protein BASIC PENTACYSTEINE1 (283 aa).

The segment at 111–170 (RFEENPIPPPAPCEEQTGKKRKMRGSIATPTVPKAKKMRKPKEERDVTNNNVQQQQQRVK) is disordered. Residues 158–169 (TNNNVQQQQQRV) show a composition bias toward low complexity.

This sequence belongs to the BBR/BPC family. As to expression, expressed in seedlings, leaves and pistils. Detected in the base of flowers and tips of carpels, in leaf and sepal vasculature, in young rosette, in the lateral and tip of primary roots, and in the whole ovule.

It localises to the nucleus. Its function is as follows. Transcriptional regulator that specifically binds to GA-rich elements (GAGA-repeats) present in regulatory sequences of genes involved in developmental processes. Negatively regulates the homeotic gene AGL11/STK, which controls ovule primordium identity, by a cooperative binding to purine-rich elements present in the regulatory sequence leading to DNA conformational changes. This is Protein BASIC PENTACYSTEINE1 (BPC1) from Arabidopsis thaliana (Mouse-ear cress).